The chain runs to 632 residues: Chaperone protein HtpG (632 aa).

An a; substrate-binding region spans residues 1–345 (MTTAAHAETL…SKDLSLNVSR (345 aa)). Residues 346–561 (ELLQKDPQVD…EHDMGYQMRR (216 aa)) are b. The interval 562-632 (LMEAAGQPLP…VQRLNKLLSH (71 aa)) is c.

The protein belongs to the heat shock protein 90 family. As to quaternary structure, homodimer.

It localises to the cytoplasm. Its function is as follows. Molecular chaperone. Has ATPase activity. This chain is Chaperone protein HtpG, found in Chromohalobacter salexigens (strain ATCC BAA-138 / DSM 3043 / CIP 106854 / NCIMB 13768 / 1H11).